Consider the following 332-residue polypeptide: Holliday junction branch migration complex subunit RuvB (332 aa).

The segment at 1–181 is large ATPase domain (RuvB-L); sequence MARILDNNVM…FGITGHMEYY (181 aa). Residues L20, R21, G62, K65, T66, T67, 128-130, R171, Y181, and R218 each bind ATP; that span reads EDF. T66 contacts Mg(2+). A small ATPAse domain (RuvB-S) region spans residues 182–252; the sequence is QEKDLTEIVE…ITDRALTMLD (71 aa). The head domain (RuvB-H) stretch occupies residues 255–332; sequence REGLNYIDQK…RHLGYPYQNT (78 aa). 4 residues coordinate DNA: R291, R310, R312, and R315.

It belongs to the RuvB family. In terms of assembly, homohexamer. Forms an RuvA(8)-RuvB(12)-Holliday junction (HJ) complex. HJ DNA is sandwiched between 2 RuvA tetramers; dsDNA enters through RuvA and exits via RuvB. An RuvB hexamer assembles on each DNA strand where it exits the tetramer. Each RuvB hexamer is contacted by two RuvA subunits (via domain III) on 2 adjacent RuvB subunits; this complex drives branch migration. In the full resolvosome a probable DNA-RuvA(4)-RuvB(12)-RuvC(2) complex forms which resolves the HJ.

The protein localises to the cytoplasm. The enzyme catalyses ATP + H2O = ADP + phosphate + H(+). The RuvA-RuvB-RuvC complex processes Holliday junction (HJ) DNA during genetic recombination and DNA repair, while the RuvA-RuvB complex plays an important role in the rescue of blocked DNA replication forks via replication fork reversal (RFR). RuvA specifically binds to HJ cruciform DNA, conferring on it an open structure. The RuvB hexamer acts as an ATP-dependent pump, pulling dsDNA into and through the RuvAB complex. RuvB forms 2 homohexamers on either side of HJ DNA bound by 1 or 2 RuvA tetramers; 4 subunits per hexamer contact DNA at a time. Coordinated motions by a converter formed by DNA-disengaged RuvB subunits stimulates ATP hydrolysis and nucleotide exchange. Immobilization of the converter enables RuvB to convert the ATP-contained energy into a lever motion, pulling 2 nucleotides of DNA out of the RuvA tetramer per ATP hydrolyzed, thus driving DNA branch migration. The RuvB motors rotate together with the DNA substrate, which together with the progressing nucleotide cycle form the mechanistic basis for DNA recombination by continuous HJ branch migration. Branch migration allows RuvC to scan DNA until it finds its consensus sequence, where it cleaves and resolves cruciform DNA. This is Holliday junction branch migration complex subunit RuvB from Streptococcus pyogenes serotype M18 (strain MGAS8232).